The sequence spans 24 residues: Cupiennin-5a (24 aa).

In terms of tissue distribution, expressed by the venom gland.

The protein localises to the secreted. This chain is Cupiennin-5a, found in Cupiennius salei (American wandering spider).